The primary structure comprises 461 residues: UPF0053 protein YhdT (461 aa).

The 202-residue stretch at 1 to 202 (MDDIDSLILI…LKNGEINPSE (202 aa)) folds into the CNNM transmembrane domain. The next 3 membrane-spanning stretches (helical) occupy residues 8–28 (ILIG…FAIV), 103–123 (VSFA…GELA), and 137–157 (LLIA…IWIL). CBS domains follow at residues 221-280 (MIPR…MTEE) and 290-347 (YVRP…IRDE).

It belongs to the UPF0053 family.

Its subcellular location is the cell membrane. This chain is UPF0053 protein YhdT (yhdT), found in Bacillus subtilis (strain 168).